We begin with the raw amino-acid sequence, 348 residues long: Putative S-adenosyl-L-methionine-dependent methyltransferase Mb3432 (348 aa).

S-adenosyl-L-methionine contacts are provided by residues aspartate 171 and 200-201 (DL).

It belongs to the UPF0677 family.

In terms of biological role, exhibits S-adenosyl-L-methionine-dependent methyltransferase activity. This is Putative S-adenosyl-L-methionine-dependent methyltransferase Mb3432 from Mycobacterium bovis (strain ATCC BAA-935 / AF2122/97).